Reading from the N-terminus, the 146-residue chain is NADH-quinone oxidoreductase subunit A (146 aa).

The next 3 helical transmembrane spans lie at 14 to 34 (FGLF…GGFL), 68 to 88 (LVAM…AWAV), and 96 to 116 (IGFI…IYLV).

Belongs to the complex I subunit 3 family. As to quaternary structure, NDH-1 is composed of 13 different subunits. Subunits NuoA, H, J, K, L, M, N constitute the membrane sector of the complex.

The protein localises to the cell inner membrane. The enzyme catalyses a quinone + NADH + 5 H(+)(in) = a quinol + NAD(+) + 4 H(+)(out). Functionally, NDH-1 shuttles electrons from NADH, via FMN and iron-sulfur (Fe-S) centers, to quinones in the respiratory chain. The immediate electron acceptor for the enzyme in this species is believed to be ubiquinone. Couples the redox reaction to proton translocation (for every two electrons transferred, four hydrogen ions are translocated across the cytoplasmic membrane), and thus conserves the redox energy in a proton gradient. The polypeptide is NADH-quinone oxidoreductase subunit A (Pectobacterium carotovorum subsp. carotovorum (Erwinia carotovora subsp. carotovora)).